The chain runs to 154 residues: Myoglobin (154 aa).

Residues 2 to 148 enclose the Globin domain; the sequence is GLSDGEWQLV…FRNDMATKYK (147 aa). The residue at position 4 (Ser-4) is a Phosphoserine. His-65 provides a ligand contact to nitrite. Position 65 (His-65) interacts with O2. His-94 serves as a coordination point for heme b.

Belongs to the globin family. As to quaternary structure, monomeric.

The protein localises to the cytoplasm. It localises to the sarcoplasm. The catalysed reaction is Fe(III)-heme b-[protein] + nitric oxide + H2O = Fe(II)-heme b-[protein] + nitrite + 2 H(+). It catalyses the reaction H2O2 + AH2 = A + 2 H2O. Its function is as follows. Monomeric heme protein which primary function is to store oxygen and facilitate its diffusion within muscle tissues. Reversibly binds oxygen through a pentacoordinated heme iron and enables its timely and efficient release as needed during periods of heightened demand. Depending on the oxidative conditions of tissues and cells, and in addition to its ability to bind oxygen, it also has a nitrite reductase activity whereby it regulates the production of bioactive nitric oxide. Under stress conditions, like hypoxia and anoxia, it also protects cells against reactive oxygen species thanks to its pseudoperoxidase activity. This Tachyglossus aculeatus aculeatus (Southeast Australian short-beaked echidna) protein is Myoglobin (MB).